A 435-amino-acid chain; its full sequence is Serine--tRNA ligase (435 aa).

The tract at residues 41–70 (QVKTEELQAQRNSRSKSIGQAKAKGDHEEA) is disordered. Over residues 49 to 58 (AQRNSRSKSI) the composition is skewed to polar residues. 242–244 (TAE) contacts L-serine. 273–275 (RSE) provides a ligand contact to ATP. Glu296 contacts L-serine. Residue 360–363 (EISS) coordinates ATP. Ser396 serves as a coordination point for L-serine.

The protein belongs to the class-II aminoacyl-tRNA synthetase family. Type-1 seryl-tRNA synthetase subfamily. Homodimer. The tRNA molecule binds across the dimer.

The protein resides in the cytoplasm. The enzyme catalyses tRNA(Ser) + L-serine + ATP = L-seryl-tRNA(Ser) + AMP + diphosphate + H(+). It catalyses the reaction tRNA(Sec) + L-serine + ATP = L-seryl-tRNA(Sec) + AMP + diphosphate + H(+). The protein operates within aminoacyl-tRNA biosynthesis; selenocysteinyl-tRNA(Sec) biosynthesis; L-seryl-tRNA(Sec) from L-serine and tRNA(Sec): step 1/1. Functionally, catalyzes the attachment of serine to tRNA(Ser). Is also able to aminoacylate tRNA(Sec) with serine, to form the misacylated tRNA L-seryl-tRNA(Sec), which will be further converted into selenocysteinyl-tRNA(Sec). The chain is Serine--tRNA ligase from Aliivibrio fischeri (strain MJ11) (Vibrio fischeri).